A 511-amino-acid chain; its full sequence is IWS1-like protein (511 aa).

Residues 1–200 (MSDHEEESHG…DDGPVDRHGR (200 aa)) form a disordered region. 2 stretches are compositionally biased toward low complexity: residues 11 to 30 (ASPTSPASSGASSPLAPISP) and 55 to 86 (APASPARDSSAPASPSAASPAGSRSPSPSPVK). A compositionally biased stretch (acidic residues) spans 94-103 (DSDEDSDAEE). Basic and acidic residues predominate over residues 134 to 143 (HEGTSKKEPT). Over residues 166–179 (LDEFVEGRDEEESQ) the composition is skewed to acidic residues. The 81-residue stretch at 294 to 374 (SALSEWLAPL…GEWARPIYHL (81 aa)) folds into the TFIIS N-terminal domain. A disordered region spans residues 382-454 (SRQEREERDY…RARVPKPSTK (73 aa)). Basic and acidic residues-rich tracts occupy residues 383–395 (RQEREERDYSRMP) and 414–425 (DQPKRPRIRDAD).

The protein belongs to the IWS1 family.

The protein resides in the nucleus. This Caenorhabditis elegans protein is IWS1-like protein.